Consider the following 318-residue polypeptide: NADH-ubiquinone oxidoreductase chain 1 (318 aa).

Transmembrane regions (helical) follow at residues 2–22, 69–89, 100–120, 146–166, 171–191, 223–243, 253–273, and 294–314; these read FMIN…FLTL, LMFI…WIPL, LGVL…LWSG, LAII…AMLI, YMWL…STLA, FFLA…ILFF, ELYT…FLWI, and LPLT…TASI.

Belongs to the complex I subunit 1 family. In terms of assembly, core subunit of respiratory chain NADH dehydrogenase (Complex I) which is composed of 45 different subunits.

The protein resides in the mitochondrion inner membrane. It carries out the reaction a ubiquinone + NADH + 5 H(+)(in) = a ubiquinol + NAD(+) + 4 H(+)(out). Core subunit of the mitochondrial membrane respiratory chain NADH dehydrogenase (Complex I) which catalyzes electron transfer from NADH through the respiratory chain, using ubiquinone as an electron acceptor. Essential for the catalytic activity and assembly of complex I. The polypeptide is NADH-ubiquinone oxidoreductase chain 1 (MT-ND1) (Felis catus (Cat)).